The following is an 800-amino-acid chain: Nuclear cap-binding protein subunit 1 (800 aa).

Residues 1–26 form a disordered region; the sequence is MSRRRAHDTEDEGYDHRRNKRRRVSE. Position 9 is a phosphothreonine (threonine 9). The MIF4G domain maps to 31–243; it reads EDRLESLILR…CLWAQIRKLR (213 aa). The interval 669 to 700 is disordered; that stretch reads LAKADSSSSDSEDDSSHKRKKPITHADKPSEE.

Belongs to the NCBP1 family. In terms of assembly, component of the nuclear cap-binding complex (CBC), a heterodimer composed of Cbp80 and Cbp20 that interacts with m7GpppG-capped RNA.

It localises to the nucleus. Its function is as follows. Component of the cap-binding complex (CBC), which binds cotranscriptionally to the 5'-cap of pre-mRNAs and is involved in various processes such as pre-mRNA splicing and RNA-mediated gene silencing (RNAi). The CBC complex is involved in miRNA-mediated RNA interference via its interaction with Ars2 and is required for primary microRNAs (miRNAs) processing. Also involved in innate immunity via the short interfering RNAs (siRNAs) processing machinery by restricting the viral RNA production. In the CBC complex, Cbp80 does not bind directly capped RNAs (m7GpppG-capped RNA) but is required to stabilize the movement of the N-terminal loop of Cbp20 and lock the CBC into a high affinity cap-binding state with the cap structure. The protein is Nuclear cap-binding protein subunit 1 (Cbp80) of Drosophila melanogaster (Fruit fly).